The following is a 123-amino-acid chain: Protein Rev (123 aa).

Ser-5 is subject to Phosphoserine; by host CK2. A homomultimerization region spans residues 18-26; the sequence is IIKLLYQSS. Residues 25-50 form a disordered region; that stretch reads SSPCPNPRGSRQARKNRRRRWRARQR. Positions 34 to 50 match the Nuclear localization signal and RNA-binding (RRE) motif; sequence SRQARKNRRRRWRARQR. Basic residues predominate over residues 35 to 49; sequence RQARKNRRRRWRARQ. The Nuclear export signal and binding to XPO1 motif lies at 73-84; it reads LQLPPIERLRLD. Residues 86–123 form a disordered region; the sequence is SESCGTSGTQQPQGTETGVGGPQISVESSAVLGSGTKN. Residues 88 to 101 are compositionally biased toward polar residues; it reads SCGTSGTQQPQGTE. Ser-92 is modified (phosphoserine; by host).

Belongs to the HIV-1 REV protein family. As to quaternary structure, homomultimer; when bound to the RRE. Multimeric assembly is essential for activity and may involve XPO1. Binds to human KPNB1, XPO1, TNPO1, RANBP5 and IPO7. Interacts with the viral Integrase. Interacts with human KHDRBS1. Interacts with human NAP1; this interaction decreases Rev multimerization and stimulates its activity. Interacts with human DEAD-box helicases DDX3 and DDX24; these interactions may serve for viral RNA export to the cytoplasm and packaging, respectively. Interacts with human PSIP1; this interaction may inhibit HIV-1 DNA integration by promoting dissociation of the Integrase-LEDGF/p75 complex. In terms of processing, asymmetrically arginine dimethylated at one site by host PRMT6. Methylation impairs the RNA-binding activity and export of viral RNA from the nucleus to the cytoplasm. Post-translationally, phosphorylated by protein kinase CK2. Presence of, and maybe binding to the N-terminus of the regulatory beta subunit of CK2 is necessary for CK2-mediated Rev's phosphorylation.

It localises to the host nucleus. The protein resides in the host nucleolus. It is found in the host cytoplasm. Escorts unspliced or incompletely spliced viral pre-mRNAs (late transcripts) out of the nucleus of infected cells. These pre-mRNAs carry a recognition sequence called Rev responsive element (RRE) located in the env gene, that is not present in fully spliced viral mRNAs (early transcripts). This function is essential since most viral proteins are translated from unspliced or partially spliced pre-mRNAs which cannot exit the nucleus by the pathway used by fully processed cellular mRNAs. Rev itself is translated from a fully spliced mRNA that readily exits the nucleus. Rev's nuclear localization signal (NLS) binds directly to KPNB1/Importin beta-1 without previous binding to KPNA1/Importin alpha-1. KPNB1 binds to the GDP bound form of RAN (Ran-GDP) and targets Rev to the nucleus. In the nucleus, the conversion from Ran-GDP to Ran-GTP dissociates Rev from KPNB1 and allows Rev's binding to the RRE in viral pre-mRNAs. Rev multimerization on the RRE via cooperative assembly exposes its nuclear export signal (NES) to the surface. Rev can then form a complex with XPO1/CRM1 and Ran-GTP, leading to nuclear export of the complex. Conversion from Ran-GTP to Ran-GDP mediates dissociation of the Rev/RRE/XPO1/RAN complex, so that Rev can return to the nucleus for a subsequent round of export. Beside KPNB1, also seems to interact with TNPO1/Transportin-1, RANBP5/IPO5 and IPO7/RANBP7 for nuclear import. The nucleoporin-like HRB/RIP is an essential cofactor that probably indirectly interacts with Rev to release HIV RNAs from the perinuclear region to the cytoplasm. This is Protein Rev from Human immunodeficiency virus type 1 group M subtype A (isolate U455) (HIV-1).